Reading from the N-terminus, the 452-residue chain is UDP-N-acetylmuramoylalanine--D-glutamate ligase (452 aa).

Gly115–Thr121 is an ATP binding site.

The protein belongs to the MurCDEF family.

It is found in the cytoplasm. The enzyme catalyses UDP-N-acetyl-alpha-D-muramoyl-L-alanine + D-glutamate + ATP = UDP-N-acetyl-alpha-D-muramoyl-L-alanyl-D-glutamate + ADP + phosphate + H(+). The protein operates within cell wall biogenesis; peptidoglycan biosynthesis. In terms of biological role, cell wall formation. Catalyzes the addition of glutamate to the nucleotide precursor UDP-N-acetylmuramoyl-L-alanine (UMA). The protein is UDP-N-acetylmuramoylalanine--D-glutamate ligase of Citrifermentans bemidjiense (strain ATCC BAA-1014 / DSM 16622 / JCM 12645 / Bem) (Geobacter bemidjiensis).